A 377-amino-acid chain; its full sequence is MAARFIQKILNQLGLIAARDAPAVTATPAVSQVNATPAASRSYSSGTKKVTLIPGDGIGPEISAAVQKIFTAANVPIEWEAVDVTPVRGPDGKFGIPQAAIDSVNTNKIGLKGPLMTPVGKGHRSLNLALRKEFNLYANVRPCRSLEGYKTLYDDVDVVTIRENTEGEYSGIEHEIVDGVVQSIKLITEEASKRVAEYAFQYAKNNNRKKVTVVHKANIMRMSDGLFLRCVRDMAQKFPEIQFEEKYLDTVCLNMVQNPGKYDVLVMPNLYGDILSDMCAGLVGGLGLTPSGNMGLNGALFESVHGTAPDIAGKDLANPTALLLSAVMMLRHMELNTYADKIERAAFETIKEGKYLTGDLGGRAKCSEFTNEICAKL.

Arg131, Arg141, Arg162, and Asp249 together coordinate substrate. Mg(2+)-binding residues include Asp249, Asp273, and Asp277.

This sequence belongs to the isocitrate and isopropylmalate dehydrogenases family. In terms of assembly, heterooligomer of subunits alpha, beta, and gamma in the apparent ratio of 2:1:1. The cofactor is Mg(2+). Mn(2+) is required as a cofactor.

Its subcellular location is the mitochondrion. It carries out the reaction D-threo-isocitrate + NAD(+) = 2-oxoglutarate + CO2 + NADH. Its function is as follows. Probable catalytic subunit of the enzyme which catalyzes the decarboxylation of isocitrate (ICT) into alpha-ketoglutarate. The sequence is that of Probable isocitrate dehydrogenase [NAD] subunit alpha, mitochondrial from Drosophila melanogaster (Fruit fly).